A 475-amino-acid polypeptide reads, in one-letter code: Methylenetetrahydrofolate--tRNA-(uracil-5-)-methyltransferase TrmFO (475 aa).

13 to 18 contributes to the FAD binding site; the sequence is GAGLAG.

This sequence belongs to the MnmG family. TrmFO subfamily. The cofactor is FAD.

Its subcellular location is the cytoplasm. It catalyses the reaction uridine(54) in tRNA + (6R)-5,10-methylene-5,6,7,8-tetrahydrofolate + NADH + H(+) = 5-methyluridine(54) in tRNA + (6S)-5,6,7,8-tetrahydrofolate + NAD(+). It carries out the reaction uridine(54) in tRNA + (6R)-5,10-methylene-5,6,7,8-tetrahydrofolate + NADPH + H(+) = 5-methyluridine(54) in tRNA + (6S)-5,6,7,8-tetrahydrofolate + NADP(+). Its function is as follows. Catalyzes the folate-dependent formation of 5-methyl-uridine at position 54 (M-5-U54) in all tRNAs. The polypeptide is Methylenetetrahydrofolate--tRNA-(uracil-5-)-methyltransferase TrmFO (Bradyrhizobium diazoefficiens (strain JCM 10833 / BCRC 13528 / IAM 13628 / NBRC 14792 / USDA 110)).